The chain runs to 147 residues: 3-dehydroquinate dehydratase (147 aa).

Tyr-24 acts as the Proton acceptor in catalysis. Residues Asn-75, His-81, and Asp-88 each coordinate substrate. The active-site Proton donor is the His-101. Substrate-binding positions include Ile-102–Ser-103 and Arg-112.

The protein belongs to the type-II 3-dehydroquinase family. Homododecamer.

The enzyme catalyses 3-dehydroquinate = 3-dehydroshikimate + H2O. The protein operates within metabolic intermediate biosynthesis; chorismate biosynthesis; chorismate from D-erythrose 4-phosphate and phosphoenolpyruvate: step 3/7. In terms of biological role, catalyzes a trans-dehydration via an enolate intermediate. The sequence is that of 3-dehydroquinate dehydratase from Cereibacter sphaeroides (strain ATCC 17023 / DSM 158 / JCM 6121 / CCUG 31486 / LMG 2827 / NBRC 12203 / NCIMB 8253 / ATH 2.4.1.) (Rhodobacter sphaeroides).